Reading from the N-terminus, the 74-residue chain is Translation initiation factor IF-1 (74 aa).

The S1-like domain occupies 1–72; sequence MSKEDAIEVE…NKGRITYRLK (72 aa).

The protein belongs to the IF-1 family. Component of the 30S ribosomal translation pre-initiation complex which assembles on the 30S ribosome in the order IF-2 and IF-3, IF-1 and N-formylmethionyl-tRNA(fMet); mRNA recruitment can occur at any time during PIC assembly.

It localises to the cytoplasm. In terms of biological role, one of the essential components for the initiation of protein synthesis. Stabilizes the binding of IF-2 and IF-3 on the 30S subunit to which N-formylmethionyl-tRNA(fMet) subsequently binds. Helps modulate mRNA selection, yielding the 30S pre-initiation complex (PIC). Upon addition of the 50S ribosomal subunit IF-1, IF-2 and IF-3 are released leaving the mature 70S translation initiation complex. This is Translation initiation factor IF-1 from Synechococcus sp. (strain JA-3-3Ab) (Cyanobacteria bacterium Yellowstone A-Prime).